Consider the following 399-residue polypeptide: tRNA-specific 2-thiouridylase MnmA (399 aa).

ATP contacts are provided by residues 21–28 (AMSGGVDS) and L47. C115 (nucleophile) is an active-site residue. A disulfide bridge links C115 with C211. An ATP-binding site is contributed by G139. An interaction with tRNA region spans residues 161–163 (RDQ). C211 serves as the catalytic Cysteine persulfide intermediate.

Belongs to the MnmA/TRMU family.

It is found in the cytoplasm. It carries out the reaction S-sulfanyl-L-cysteinyl-[protein] + uridine(34) in tRNA + AH2 + ATP = 2-thiouridine(34) in tRNA + L-cysteinyl-[protein] + A + AMP + diphosphate + H(+). Catalyzes the 2-thiolation of uridine at the wobble position (U34) of tRNA, leading to the formation of s(2)U34. This is tRNA-specific 2-thiouridylase MnmA from Parvibaculum lavamentivorans (strain DS-1 / DSM 13023 / NCIMB 13966).